The following is a 329-amino-acid chain: Probable ABC transporter permease protein MG188 (329 aa).

The next 6 membrane-spanning stretches (helical) occupy residues 30 to 50, 96 to 116, 128 to 148, 176 to 196, 234 to 254, and 283 to 303; these read FLLF…PFFL, LISL…IVFV, VFFL…VYIF, ALWA…VLII, LIFL…LALF, and NLAG…GLVL. In terms of domain architecture, ABC transmembrane type-1 spans 88–303; that stretch reads LRNSFLYSLI…VLGVCYGLVL (216 aa).

This sequence belongs to the binding-protein-dependent transport system permease family. MalFG subfamily.

It localises to the cell membrane. In terms of biological role, probably part of a binding-protein-dependent transport system. Probably responsible for the translocation of the substrate across the membrane. The protein is Probable ABC transporter permease protein MG188 of Mycoplasma genitalium (strain ATCC 33530 / DSM 19775 / NCTC 10195 / G37) (Mycoplasmoides genitalium).